A 133-amino-acid polypeptide reads, in one-letter code: Holo-[acyl-carrier-protein] synthase (133 aa).

Positions 8 and 57 each coordinate Mg(2+).

The protein belongs to the P-Pant transferase superfamily. AcpS family. Mg(2+) is required as a cofactor.

It is found in the cytoplasm. The catalysed reaction is apo-[ACP] + CoA = holo-[ACP] + adenosine 3',5'-bisphosphate + H(+). Its function is as follows. Transfers the 4'-phosphopantetheine moiety from coenzyme A to a Ser of acyl-carrier-protein. This Bartonella tribocorum (strain CIP 105476 / IBS 506) protein is Holo-[acyl-carrier-protein] synthase.